The following is a 269-amino-acid chain: MAQFLRLCIWLLALGSCLLATVQADCSQDCAKCSYRLVRPGDINFLACTLECEGQLPSFKIWETCKDLLQVSKPEFPWDNIDMYKDSSKQDESHLLAKKYGGFMKRYGGFMKKMDELYPVEPEEEANGGEILAKRYGGFMKKDADEGDTLANSSDLLKELLGTGDNRAKDSHQQESTNNDEDSTSKRYGGFMRGLKRSPQLEDEAKELQKRYGGFMRRVGRPEWWMDYQKRYGGFLKRFAESLPSDEEGESYSKEVPEMEKRYGGFMRF.

The first 24 residues, 1-24 (MAQFLRLCIWLLALGSCLLATVQA), serve as a signal peptide directing secretion. Disulfide bonds link C26/C48, C30/C52, and C33/C65. The tract at residues 165-191 (DNRAKDSHQQESTNNDEDSTSKRYGGF) is disordered. 2 consecutive propeptides follow at residues 198-209 (SPQLEDEAKELQ) and 219-229 (VGRPEWWMDYQ). S253 bears the Phosphoserine mark.

It belongs to the opioid neuropeptide precursor family. In terms of processing, proenkephalin-A is cleaved by CTSL to generate Met-enkephalin. Post-translationally, processed and degraded by ACE. Probably cleaved by ACE. In terms of processing, processed by ACE to generate Met-enkephalin in the nucleus accumbens of the brain. Post-translationally, the N-terminal domain contains 6 conserved cysteines thought to be involved in disulfide bonding and/or processing. As to expression, expressed in brain, heart and testis.

The protein localises to the secreted. Its subcellular location is the cytoplasmic vesicle. It localises to the secretory vesicle. It is found in the chromaffin granule lumen. Neuropeptide that competes with and mimic the effects of opiate drugs. They play a role in a number of physiologic functions, including pain perception and responses to stress. In terms of biological role, met-enkephalin-Arg-Phe neuropeptide acts as a strong ligand of Mu-type opioid receptor OPRM1. Met-enkephalin-Arg-Phe-binding to OPRM1 in the nucleus accumbens of the brain increases activation of OPRM1, leading to long-term synaptic depression of glutamate release. Functionally, increases glutamate release in the striatum and decreases GABA concentration in the striatum. Its function is as follows. Increases glutamate release in the striatum. This is Proenkephalin-A (Penk) from Rattus norvegicus (Rat).